Reading from the N-terminus, the 708-residue chain is MSKRLRSSDVCADCNGPDPSWASVNRGTFICDECCSVHRSLGRHISQVRHLKHTAWPPTLLQMVETLYNNGANSIWEHSLLDPASIMSGRRKANPQDKVHPNKAEFIRAKYQMLAFVHRLPCREDDSVTAKDLSKQLHSSVRTGNLETCLRLLSLGAQANFFHPEKGSTPLHVASKAGQILQAELLAVYGADPGTQDSSGKTPVDYARQGGHHELAERLIEIQYELTDRLAFYLCGRKPDHKSGQHFLIPQRADSLDLSELAKAAKKKLQSLSNHLFEELAMDVYDEVDRRETDAVWLATQNHSTLVTETTVVPFLPVNPEYSSTRNQGRQKLARFNAHEFATLVIDILSDAKRRQQGSPLSRSKDNVELILRTVSTQHSTESQDNDQPDYDSVASDEDTDVETRASKANRQKLQTLQSENSSLRRQATASACQVQTGSDHKDTASHSSLKRRPSARGSRPMSMYETGSGQKPYLPMGEASHPEESRTRLQPFPTHIGRSALVTSSSSLPSFPSTLSWSRDESARRASRLEKQNSTPESDYDNTACDPEPDDTGSTRKGRQRSMLWQGDGLLPDTAEPHSVPSPTLPSTEDVIRKTEQITKNIQELLRAAQENKHDSYIPCSERIHVAVTEMAALFPKKPKSDTVRTSLRLLTSSAYRLQSECRKALPGDSSLPTDVQLVTQQVIQCAYDIAKAAKQLVTITTKENSS.

Residues 1–124 (MSKRLRSSDV…AFVHRLPCRE (124 aa)) enclose the Arf-GAP domain. The C4-type zinc finger occupies 11 to 34 (CADCNGPDPSWASVNRGTFICDEC). 3 ANK repeats span residues 132–161 (DLSK…QANF), 166–195 (KGST…DPGT), and 199–228 (SGKT…ELTD). The tract at residues 376-592 (STQHSTESQD…SPTLPSTEDV (217 aa)) is disordered. Residues 384 to 401 (QDNDQPDYDSVASDEDTD) are compositionally biased toward acidic residues. Phosphoserine is present on residues Ser393 and Ser396. Thr400 is modified (phosphothreonine). Positions 407-438 (SKANRQKLQTLQSENSSLRRQATASACQVQTG) are enriched in polar residues. Residues 504-518 (TSSSSLPSFPSTLSW) show a composition bias toward low complexity. Phosphoserine is present on residues Ser508, Ser511, and Ser519. A compositionally biased stretch (basic and acidic residues) spans 519 to 532 (SRDESARRASRLEK). Phosphothreonine is present on Thr536. A Phosphoserine modification is found at Ser563.

May form heterooligomers with GIT1. Directly interacts with protein Piccolo/PCLO. Interacts with PPFIA1 and PPFIA2. Interacts with ARHGEF7. Identified in a complex with ARHGEF6 and BIN2. Interacts with PAK3. Interacts with PXN/paxillin. Interacts with TGFB1I1. Forms a complex with EFNB1 and GRB4/NCK2. Tyrosine phosphorylated when coexpressed in cells with PTK2/FAK1 and SRC. As to expression, expressed in the brain (at protein level).

Functionally, GTPase-activating protein for ADP ribosylation factor family members, including ARF1. The protein is ARF GTPase-activating protein GIT2 (Git2) of Mus musculus (Mouse).